We begin with the raw amino-acid sequence, 248 residues long: Probable transcriptional regulatory protein HCH_04926 (248 aa).

It belongs to the TACO1 family.

It localises to the cytoplasm. This Hahella chejuensis (strain KCTC 2396) protein is Probable transcriptional regulatory protein HCH_04926.